A 277-amino-acid chain; its full sequence is Caspase-3 (277 aa).

The residue at position 1 (Met-1) is an N-acetylmethionine. 2 consecutive propeptides follow at residues 1 to 9 and 10 to 28; these read MENNKTSVD and SKSI…KSVD. Lys-11 carries the post-translational modification N6-acetyllysine. The residue at position 26 (Ser-26) is a Phosphoserine. Catalysis depends on residues His-121 and Cys-163. Position 163 is an S-nitrosocysteine; in inhibited form (Cys-163).

It belongs to the peptidase C14A family. As to quaternary structure, heterotetramer that consists of two anti-parallel arranged heterodimers, each one formed by a 17 kDa (p17) and a 12 kDa (p12) subunit. Interacts with BIRC6/bruce. Post-translationally, cleavage by granzyme B, caspase-6, caspase-8 and caspase-10 generates the two active subunits. Additional processing of the propeptides is likely due to the autocatalytic activity of the activated protease. Active heterodimers between the small subunit of caspase-7 protease and the large subunit of caspase-3 also occur and vice versa. In terms of processing, S-nitrosylated on its catalytic site cysteine in unstimulated cell lines and denitrosylated upon activation of the Fas apoptotic pathway, associated with an increase in intracellular caspase activity. Fas therefore activates caspase-3 not only by inducing the cleavage of the caspase zymogen to its active subunits, but also by stimulating the denitrosylation of its active site thiol. Ubiquitinated by BIRC6; this activity is inhibited by DIABLO/SMAC. In terms of tissue distribution, highest expression in spleen, lung, liver, kidney and heart. Lower expression in brain, skeletal muscle and testis.

It is found in the cytoplasm. It catalyses the reaction Strict requirement for an Asp residue at positions P1 and P4. It has a preferred cleavage sequence of Asp-Xaa-Xaa-Asp-|- with a hydrophobic amino-acid residue at P2 and a hydrophilic amino-acid residue at P3, although Val or Ala are also accepted at this position.. Its activity is regulated as follows. Inhibited by BIRC6; following inhibition of BIRC6-caspase binding by DIABLO/SMAC, BIRC6 is subjected to caspase cleavage, leading to an increase in active caspases. Its function is as follows. Thiol protease that acts as a major effector caspase involved in the execution phase of apoptosis. Following cleavage and activation by initiator caspases (CASP8, CASP9 and/or CASP10), mediates execution of apoptosis by catalyzing cleavage of many proteins. At the onset of apoptosis, it proteolytically cleaves poly(ADP-ribose) polymerase PARP1 at a '216-Asp-|-Gly-217' bond. Cleaves and activates sterol regulatory element binding proteins (SREBPs) between the basic helix-loop-helix leucine zipper domain and the membrane attachment domain. Cleaves and activates caspase-6, -7 and -9 (CASP6, CASP7 and CASP9, respectively). Cleaves and inactivates interleukin-18 (IL18). Triggers cell adhesion in sympathetic neurons through RET cleavage. Cleaves IL-1 beta between an Asp and an Ala, releasing the mature cytokine which is involved in a variety of inflammatory processes. Cleaves and inhibits serine/threonine-protein kinase AKT1 in response to oxidative stress. Acts as an inhibitor of type I interferon production during virus-induced apoptosis by mediating cleavage of antiviral proteins CGAS, IRF3 and MAVS, thereby preventing cytokine overproduction. Also involved in pyroptosis by mediating cleavage and activation of gasdermin-E (GSDME). Cleaves XRCC4 and phospholipid scramblase proteins XKR4, XKR8 and XKR9, leading to promote phosphatidylserine exposure on apoptotic cell surface. Cleaves BIRC6 following inhibition of BIRC6-caspase binding by DIABLO/SMAC. The polypeptide is Caspase-3 (Casp3) (Mus musculus (Mouse)).